Here is a 374-residue protein sequence, read N- to C-terminus: 12-oxophytodienoate reductase 2 (374 aa).

Methionine 1 is subject to N-acetylmethionine. FMN is bound by residues 33–35, alanine 66, and glutamine 108; that span reads PLT. Histidine 185 lines the substrate pocket. Residue tyrosine 190 is the Proton donor of the active site. Residue arginine 237 participates in FMN binding. Arginine 277 contributes to the substrate binding site. FMN is bound by residues 305 to 307 and 328 to 329; these read AGG and GR.

This sequence belongs to the NADH:flavin oxidoreductase/NADH oxidase family. It depends on FMN as a cofactor. Expressed at highest levels in roots and cotyledons, and at lower levels in leaves, shoots and flowers (sepals, petals, maturing siliques and developing pollen).

The protein resides in the cytoplasm. The catalysed reaction is (1S,2S)-OPC-8 + NADP(+) = (9S,13S,15Z)-12-oxophyto-10,15-dienoate + NADPH + H(+). It catalyses the reaction a 4,5-didehydrojasmonate + NADPH + H(+) = a jasmonate + NADP(+). The protein operates within lipid metabolism; oxylipin biosynthesis. Specifically cleaves olefinic bonds in alpha,beta-unsaturated carbonyls and may be involved in detoxification or modification of these reactive compounds. May be involved in the biosynthesis or metabolism of oxylipin signaling molecules. In vitro, reduces 9R,13R-12-oxophytodienoic acid (9R,13R-OPDA) to 9R,13R-OPC-8:0, but only poorly 9S,13S-OPDA, the natural precursor of jasmonic acid (JA). Can detoxify the explosive 2,4,6-trinitrotoluene (TNT) in vitro and in vivo by catalyzing its nitroreduction to form hydroxylamino-dinitrotoluene (HADNT). Functions in an alternative and OPR3-independent pathway for JA biosynthesis. Catalyzes the NADPH-dependent reduction of 4,5-didehydrojasmonates to jasmonates. The protein is 12-oxophytodienoate reductase 2 of Arabidopsis thaliana (Mouse-ear cress).